Consider the following 587-residue polypeptide: Aspartate--tRNA ligase (587 aa).

Glu174 is a binding site for L-aspartate. The aspartate stretch occupies residues 198–201 (QITK). Arg220 is an L-aspartate binding site. ATP-binding positions include 220–222 (RDE) and Gln229. Residue His443 coordinates L-aspartate. An ATP-binding site is contributed by Glu477. Arg484 contacts L-aspartate. 529 to 532 (GLDR) provides a ligand contact to ATP.

The protein belongs to the class-II aminoacyl-tRNA synthetase family. Type 1 subfamily. In terms of assembly, homodimer.

It is found in the cytoplasm. The catalysed reaction is tRNA(Asp) + L-aspartate + ATP = L-aspartyl-tRNA(Asp) + AMP + diphosphate. Catalyzes the attachment of L-aspartate to tRNA(Asp) in a two-step reaction: L-aspartate is first activated by ATP to form Asp-AMP and then transferred to the acceptor end of tRNA(Asp). The chain is Aspartate--tRNA ligase from Streptococcus pneumoniae serotype 4 (strain ATCC BAA-334 / TIGR4).